We begin with the raw amino-acid sequence, 1032 residues long: Kinesin heavy chain isoform 5A (1032 aa).

Position 2 is an N-acetylalanine (Ala2). A Kinesin motor domain is found at 9–327 (SIKVLCRFRP…LMFGQRAKTI (319 aa)). 86 to 93 (GQTSSGKT) contributes to the ATP binding site. The microtubule-binding stretch occupies residues 174–315 (VSGPEEILDV…PSSYNDAETK (142 aa)). The necessary for interaction with ZFYVE27 stretch occupies residues 271–361 (EGTKSYVPYR…KTKAQKETIA (91 aa)). Residues 331 to 906 (ASVNLELTAE…VDRIKEAVRY (576 aa)) adopt a coiled-coil conformation. The segment at 353–1032 (TKAQKETIAK…FPLHQETAAS (680 aa)) is interaction with BICD2. Thr397 is subject to Phosphothreonine. The interval 904-939 (VRYKSSGKRGHSAQIAKPVRPGHYPASSPTNPYGTR) is disordered. The interval 907–1032 (KSSGKRGHSA…FPLHQETAAS (126 aa)) is globular.

Belongs to the TRAFAC class myosin-kinesin ATPase superfamily. Kinesin family. Kinesin subfamily. As to quaternary structure, oligomer composed of two heavy chains and two light chains. Interacts with GRIP1. Interacts with FMR1 (via C-terminus); this interaction is increased in a mGluR-dependent manner. Interacts with BORCS5. Interacts with ZFYVE27. Interacts with VAPA, VAPB, SURF4, RAB11A (GDP-bound form), RAB11B (GDP-bound form) and RTN3 in a ZFYVE27-dependent manner. Interacts with BICD2. Interacts with DTNB.

The protein resides in the cytoplasm. The protein localises to the perinuclear region. It localises to the cytoskeleton. Its subcellular location is the perikaryon. It carries out the reaction ATP + H2O + a kinesin associated with a microtubule at position (n) = ADP + phosphate a kinesin associated with a microtubule at position (n+1, toward the plus end).. Functionally, microtubule-dependent motor required for slow axonal transport of neurofilament proteins (NFH, NFM and NFL). Can induce formation of neurite-like membrane protrusions in non-neuronal cells in a ZFYVE27-dependent manner. The ZFYVE27-KIF5A complex contributes to the vesicular transport of VAPA, VAPB, SURF4, RAB11A, RAB11B and RTN3 proteins in neurons. Required for anterograde axonal transportation of MAPK8IP3/JIP3 which is essential for MAPK8IP3/JIP3 function in axon elongation. The chain is Kinesin heavy chain isoform 5A (KIF5A) from Pongo abelii (Sumatran orangutan).